The following is a 551-amino-acid chain: Cilia- and flagella-associated protein 45 (551 aa).

3 disordered regions span residues 1 to 52 (MPLR…KSDS), 232 to 256 (MEID…ERVR), and 385 to 415 (EQDA…KKIE). The segment covering 8–18 (ASSSASTASNR) has biased composition (low complexity). Positions 276–524 (AEHREQEKEQ…EDIKKQKLEE (249 aa)) form a coiled coil. Positions 387-415 (DALRAKRNQEVADREWRRKEKENAQKKIE) are enriched in basic and acidic residues.

Belongs to the CFAP45 family. As to quaternary structure, microtubule inner protein component of sperm flagellar doublet microtubules. Interacts with AK8; dimerization with AK8 may create a cavity at the interface of the dimer that can accommodate AMP. Interacts with CFAP52. Interacts with ENKUR. Directly interacts with DNALI1. Interacts with DNAH11. Interacts with DNAI1. Expressed in respiratory cells and in sperm (at protein level).

It is found in the cytoplasm. It localises to the cytoskeleton. Its subcellular location is the cilium axoneme. The protein resides in the flagellum axoneme. The protein localises to the cell projection. It is found in the cilium. It localises to the flagellum. Functionally, microtubule inner protein (MIP) part of the dynein-decorated doublet microtubules (DMTs) in cilia axoneme, which is required for motile cilia beating. It is an AMP-binding protein that may facilitate dynein ATPase-dependent ciliary and flagellar beating via adenine nucleotide homeostasis. May function as a donor of AMP to AK8 and hence promote ADP production. In Mus musculus (Mouse), this protein is Cilia- and flagella-associated protein 45 (Cfap45).